The following is a 398-amino-acid chain: CCA-adding enzyme (398 aa).

ATP is bound by residues G32 and R35. 2 residues coordinate CTP: G32 and R35. 2 residues coordinate Mg(2+): D45 and D47. R116, D159, R162, R165, and R168 together coordinate ATP. 5 residues coordinate CTP: R116, D159, R162, R165, and R168.

The protein belongs to the tRNA nucleotidyltransferase/poly(A) polymerase family. Bacterial CCA-adding enzyme type 3 subfamily. As to quaternary structure, homodimer. The cofactor is Mg(2+).

The catalysed reaction is a tRNA precursor + 2 CTP + ATP = a tRNA with a 3' CCA end + 3 diphosphate. It carries out the reaction a tRNA with a 3' CCA end + 2 CTP + ATP = a tRNA with a 3' CCACCA end + 3 diphosphate. In terms of biological role, catalyzes the addition and repair of the essential 3'-terminal CCA sequence in tRNAs without using a nucleic acid template. Adds these three nucleotides in the order of C, C, and A to the tRNA nucleotide-73, using CTP and ATP as substrates and producing inorganic pyrophosphate. tRNA 3'-terminal CCA addition is required both for tRNA processing and repair. Also involved in tRNA surveillance by mediating tandem CCA addition to generate a CCACCA at the 3' terminus of unstable tRNAs. While stable tRNAs receive only 3'-terminal CCA, unstable tRNAs are marked with CCACCA and rapidly degraded. The protein is CCA-adding enzyme of Lactobacillus gasseri (strain ATCC 33323 / DSM 20243 / BCRC 14619 / CIP 102991 / JCM 1131 / KCTC 3163 / NCIMB 11718 / NCTC 13722 / AM63).